A 152-amino-acid chain; its full sequence is Endoribonuclease YbeY (152 aa).

Residues His-113, His-117, and His-123 each contribute to the Zn(2+) site.

The protein belongs to the endoribonuclease YbeY family. It depends on Zn(2+) as a cofactor.

The protein resides in the cytoplasm. In terms of biological role, single strand-specific metallo-endoribonuclease involved in late-stage 70S ribosome quality control and in maturation of the 3' terminus of the 16S rRNA. The protein is Endoribonuclease YbeY of Janthinobacterium sp. (strain Marseille) (Minibacterium massiliensis).